The chain runs to 352 residues: Photosystem II D2 protein (352 aa).

Position 2 is an N-acetylthreonine (T2). T2 bears the Phosphothreonine mark. A helical membrane pass occupies residues 40-60 (TAYLALGGWLTGTTFVTSWYT). Position 117 (H117) interacts with chlorophyll a. A helical membrane pass occupies residues 124 to 140 (GFMLRQFEIARSVKLRP). Positions 129 and 142 each coordinate pheophytin a. A helical membrane pass occupies residues 152-165 (VFVSVFLIYPLGQS). H197 is a chlorophyll a binding site. The chain crosses the membrane as a helical span at residues 207–227 (AALLCAIHGATVENTLFEDGD). Residues H214 and F261 each coordinate a plastoquinone. Fe cation is bound at residue H214. H268 lines the Fe cation pocket. A helical transmembrane segment spans residues 278–294 (GLWMSALGVVGLALNLR).

Belongs to the reaction center PufL/M/PsbA/D family. As to quaternary structure, PSII is composed of 1 copy each of membrane proteins PsbA, PsbB, PsbC, PsbD, PsbE, PsbF, PsbH, PsbI, PsbJ, PsbK, PsbL, PsbM, PsbT, PsbX, PsbY, PsbZ, Psb30/Ycf12, at least 3 peripheral proteins of the oxygen-evolving complex and a large number of cofactors. It forms dimeric complexes. The D1/D2 heterodimer binds P680, chlorophylls that are the primary electron donor of PSII, and subsequent electron acceptors. It shares a non-heme iron and each subunit binds pheophytin, quinone, additional chlorophylls, carotenoids and lipids. There is also a Cl(-1) ion associated with D1 and D2, which is required for oxygen evolution. The PSII complex binds additional chlorophylls, carotenoids and specific lipids. serves as cofactor.

It is found in the plastid. Its subcellular location is the chloroplast thylakoid membrane. The catalysed reaction is 2 a plastoquinone + 4 hnu + 2 H2O = 2 a plastoquinol + O2. Functionally, photosystem II (PSII) is a light-driven water:plastoquinone oxidoreductase that uses light energy to abstract electrons from H(2)O, generating O(2) and a proton gradient subsequently used for ATP formation. It consists of a core antenna complex that captures photons, and an electron transfer chain that converts photonic excitation into a charge separation. The D1/D2 (PsbA/PsbD) reaction center heterodimer binds P680, the primary electron donor of PSII as well as several subsequent electron acceptors. D2 is needed for assembly of a stable PSII complex. This Pleurastrum terricola (Filamentous green alga) protein is Photosystem II D2 protein.